A 386-amino-acid polypeptide reads, in one-letter code: Zinc finger CCCH domain-containing protein 39 (386 aa).

The segment at 1 to 90 (MDSSYSDSRP…SSSNPWMVPS (90 aa)) is disordered. The span at 20–37 (WNQTQMIDSMANPMNNEQ) shows a compositional bias: polar residues. Residues 43-58 (LSESQSQSQPSQQLQP) are compositionally biased toward low complexity. The span at 72–85 (NPASSFPQPSSSNP) shows a compositional bias: polar residues. Residues 104–131 (FYKTRMCAKFRAGTCRNGELCNFAHGIE) form a C3H1-type 1 zinc finger. The interval 136-166 (PPSNWQEIVGPPPAGQDRERERERERERERP) is disordered. A compositionally biased stretch (basic and acidic residues) spans 151-166 (QDRERERERERERERP). C3H1-type zinc fingers lie at residues 183–211 (ILRM…HEDL) and 269–297 (YWKT…HGQA).

The polypeptide is Zinc finger CCCH domain-containing protein 39 (Arabidopsis thaliana (Mouse-ear cress)).